The following is a 715-amino-acid chain: Palmitoyltransferase ZDHHC5 (715 aa).

The Cytoplasmic segment spans residues 1–13 (MPAESGKRFKPSK). A helical transmembrane segment spans residues 14–34 (YVPVSAAAIFLVGATTLFFAF). Residues 35 to 38 (TCPG) are Extracellular-facing. Residues 39–59 (LSLCVSPAVPIYNAIVFLFVL) traverse the membrane as a helical segment. Topologically, residues 60–148 (ANFSMATFMD…NCIGRRNYRY (89 aa)) are cytoplasmic. Tyrosine 91 carries the phosphotyrosine modification. A DHHC domain is found at 104–154 (KWCATCRFYRPPRCSHCSVCDNCVEEFDHHCPWVNNCIGRRNYRYFFLFLL). Catalysis depends on cysteine 134, which acts as the S-palmitoyl cysteine intermediate. Residues 149–169 (FFLFLLSLTAHIMGVFGFGLL) traverse the membrane as a helical segment. Residues 170–191 (YVLYHMEELSGVRTAVTMAVMC) lie on the Extracellular side of the membrane. Residues 192 to 212 (VAGLFFIPVAGLTGFHVVLVA) traverse the membrane as a helical segment. Residues 213–715 (RGRTTNEQVT…VGGTTYEISV (503 aa)) are Cytoplasmic-facing. Serine 247, serine 296, and serine 299 each carry phosphoserine. The interval 289-648 (GELRRSKSKG…SQKAPAGVSE (360 aa)) is disordered. Threonine 303 carries the post-translational modification Phosphothreonine. A Phosphoserine modification is found at serine 345. Residues threonine 348 and threonine 350 each carry the phosphothreonine modification. The span at 359-373 (SSSSTSAAMPHSSSA) shows a compositional bias: low complexity. Residues serine 380, serine 398, serine 406, and serine 409 each carry the phosphoserine modification. Threonine 411 carries the post-translational modification Phosphothreonine. Phosphoserine is present on residues serine 415, serine 425, serine 429, and serine 432. The span at 422-432 (SSGSRSSSLKS) shows a compositional bias: low complexity. Threonine 436 is subject to Phosphothreonine. The span at 442 to 478 (QLQSIRSEGTTSTSYKSLANQTRNGSLSYDSLLTPSD) shows a compositional bias: polar residues. Serine 529 and serine 554 each carry phosphoserine. Arginine 617 carries the post-translational modification Omega-N-methylarginine. A Phosphoserine modification is found at serine 621. The residue at position 659 (threonine 659) is a Phosphothreonine. The tract at residues 666–715 (LKTAYSKSNGQPKSIGSASPGPGQQPLSSPTRGGVKKVSGVGGTTYEISV) is disordered. Residues 668 to 679 (TAYSKSNGQPKS) show a composition bias toward polar residues. The span at 681 to 695 (GSASPGPGQQPLSSP) shows a compositional bias: low complexity. Serine 684 and serine 694 each carry phosphoserine. Arginine 697 bears the Omega-N-methylarginine mark.

Belongs to the DHHC palmitoyltransferase family. ERF2/ZDHHC9 subfamily. Phosphorylation regulates association with endocytic proteins and its subcellular localization. Phosphorylation by LYN during fatty acid uptake leads to inactivation of the activity. In terms of processing, autopalmitoylated. Palmitoylation of the C-terminal tail regulates stimulation-dependent plasma membrane motility.

The protein resides in the cell membrane. The enzyme catalyses L-cysteinyl-[protein] + hexadecanoyl-CoA = S-hexadecanoyl-L-cysteinyl-[protein] + CoA. Functionally, palmitoyltransferase that catalyzes the addition of palmitate onto various protein substrates such as CTNND2, CD36, GSDMD, NLRP3, NOD1, NOD2, STAT3 and S1PR1 thus plays a role in various biological processes including cell adhesion, inflammation, fatty acid uptake, bacterial sensing or cardiac functions. Plays an important role in the regulation of synapse efficacy by mediating palmitoylation of delta-catenin/CTNND2, thereby increasing synaptic delivery and surface stabilization of alpha-amino-3-hydroxy-5-methyl-4-isoxazole propionic acid receptors (AMPARs). Under basal conditions, remains at the synaptic membrane through FYN-mediated phosphorylation that prevents association with endocytic proteins. Neuronal activity enhances the internalization and trafficking of DHHC5 from spines to dendritic shafts where it palmitoylates delta-catenin/CTNND2. Regulates cell adhesion at the plasma membrane by palmitoylating GOLGA7B and DSG2. Plays a role in innate immune response by mediating the palmitoylation of NOD1 and NOD2 and their proper recruitment to the bacterial entry site and phagosomes. Also participates in fatty acid uptake by palmitoylating CD36 and thereby targeting it to the plasma membrane. Upon binding of fatty acids to CD36, gets phosphorylated by LYN leading to inactivation and subsequent CD36 caveolar endocytosis. Controls oligodendrocyte development by catalyzing STAT3 palmitoylation. Acts as a regulator of inflammatory response by mediating palmitoylation of NLRP3 and GSDMD. Palmitoylates NLRP3 to promote inflammasome assembly and activation. Activates pyroptosis by catalyzing palmitoylation of gasdermin-D (GSDMD), thereby promoting membrane translocation and pore formation of GSDMD. This chain is Palmitoyltransferase ZDHHC5 (ZDHHC5), found in Canis lupus familiaris (Dog).